The chain runs to 374 residues: Alanine racemase (374 aa).

Lys-34 (proton acceptor; specific for D-alanine) is an active-site residue. Lys-34 carries the N6-(pyridoxal phosphate)lysine modification. Arg-147 serves as a coordination point for substrate. Tyr-271 serves as the catalytic Proton acceptor; specific for L-alanine. Met-319 provides a ligand contact to substrate.

This sequence belongs to the alanine racemase family. Pyridoxal 5'-phosphate is required as a cofactor.

It carries out the reaction L-alanine = D-alanine. The protein operates within amino-acid biosynthesis; D-alanine biosynthesis; D-alanine from L-alanine: step 1/1. Functionally, catalyzes the interconversion of L-alanine and D-alanine. May also act on other amino acids. The polypeptide is Alanine racemase (alr) (Haemophilus ducreyi (strain 35000HP / ATCC 700724)).